The sequence spans 602 residues: Elongation factor 4 (602 aa).

The tr-type G domain occupies 7-189; sequence SKIRNFCIIA…AIVRRVPPPQ (183 aa). Residues 19–24 and 136–139 contribute to the GTP site; these read DHGKST and NKVD.

Belongs to the TRAFAC class translation factor GTPase superfamily. Classic translation factor GTPase family. LepA subfamily.

The protein resides in the cell inner membrane. It catalyses the reaction GTP + H2O = GDP + phosphate + H(+). Functionally, required for accurate and efficient protein synthesis under certain stress conditions. May act as a fidelity factor of the translation reaction, by catalyzing a one-codon backward translocation of tRNAs on improperly translocated ribosomes. Back-translocation proceeds from a post-translocation (POST) complex to a pre-translocation (PRE) complex, thus giving elongation factor G a second chance to translocate the tRNAs correctly. Binds to ribosomes in a GTP-dependent manner. This Prochlorococcus marinus (strain MIT 9301) protein is Elongation factor 4.